Consider the following 890-residue polypeptide: Alanine--tRNA ligase (890 aa).

Zn(2+)-binding residues include histidine 578, histidine 582, cysteine 689, and histidine 693.

Belongs to the class-II aminoacyl-tRNA synthetase family. Requires Zn(2+) as cofactor.

The protein resides in the cytoplasm. The catalysed reaction is tRNA(Ala) + L-alanine + ATP = L-alanyl-tRNA(Ala) + AMP + diphosphate. Its function is as follows. Catalyzes the attachment of alanine to tRNA(Ala) in a two-step reaction: alanine is first activated by ATP to form Ala-AMP and then transferred to the acceptor end of tRNA(Ala). Also edits incorrectly charged Ser-tRNA(Ala) and Gly-tRNA(Ala) via its editing domain. The polypeptide is Alanine--tRNA ligase (Deinococcus radiodurans (strain ATCC 13939 / DSM 20539 / JCM 16871 / CCUG 27074 / LMG 4051 / NBRC 15346 / NCIMB 9279 / VKM B-1422 / R1)).